The chain runs to 338 residues: Tetraacyldisaccharide 4'-kinase (338 aa).

63–70 (TVGGSGKT) contacts ATP.

The protein belongs to the LpxK family.

The catalysed reaction is a lipid A disaccharide + ATP = a lipid IVA + ADP + H(+). The protein operates within glycolipid biosynthesis; lipid IV(A) biosynthesis; lipid IV(A) from (3R)-3-hydroxytetradecanoyl-[acyl-carrier-protein] and UDP-N-acetyl-alpha-D-glucosamine: step 6/6. In terms of biological role, transfers the gamma-phosphate of ATP to the 4'-position of a tetraacyldisaccharide 1-phosphate intermediate (termed DS-1-P) to form tetraacyldisaccharide 1,4'-bis-phosphate (lipid IVA). This Shewanella loihica (strain ATCC BAA-1088 / PV-4) protein is Tetraacyldisaccharide 4'-kinase.